Here is a 559-residue protein sequence, read N- to C-terminus: CTP synthase (559 aa).

Residues 1-270 (MTKFVFVTGG…DGLICDKLRI (270 aa)) form an amidoligase domain region. Ser13 provides a ligand contact to CTP. Position 13 (Ser13) interacts with UTP. ATP-binding positions include 14 to 19 (SLGKGI) and Asp71. Mg(2+) contacts are provided by Asp71 and Glu144. CTP contacts are provided by residues 151–153 (DIE), 191–196 (KTKPTQ), and Lys227. UTP contacts are provided by residues 191 to 196 (KTKPTQ) and Lys227. The region spanning 295–547 (SIAMVGKYVD…IKAALDHKAR (253 aa)) is the Glutamine amidotransferase type-1 domain. Residue Gly356 participates in L-glutamine binding. Cys383 acts as the Nucleophile; for glutamine hydrolysis in catalysis. L-glutamine-binding positions include 384–387 (LGMQ), Glu407, and Arg473. Catalysis depends on residues His520 and Glu522.

Belongs to the CTP synthase family. Homotetramer.

The enzyme catalyses UTP + L-glutamine + ATP + H2O = CTP + L-glutamate + ADP + phosphate + 2 H(+). The catalysed reaction is L-glutamine + H2O = L-glutamate + NH4(+). It carries out the reaction UTP + NH4(+) + ATP = CTP + ADP + phosphate + 2 H(+). The protein operates within pyrimidine metabolism; CTP biosynthesis via de novo pathway; CTP from UDP: step 2/2. Allosterically activated by GTP, when glutamine is the substrate; GTP has no effect on the reaction when ammonia is the substrate. The allosteric effector GTP functions by stabilizing the protein conformation that binds the tetrahedral intermediate(s) formed during glutamine hydrolysis. Inhibited by the product CTP, via allosteric rather than competitive inhibition. In terms of biological role, catalyzes the ATP-dependent amination of UTP to CTP with either L-glutamine or ammonia as the source of nitrogen. Regulates intracellular CTP levels through interactions with the four ribonucleotide triphosphates. This chain is CTP synthase, found in Variovorax paradoxus (strain S110).